The following is a 333-amino-acid chain: Fe(3+)-citrate import system permease protein YfmE (333 aa).

Transmembrane regions (helical) follow at residues 12-32 (LLAI…SIGI), 65-85 (IILA…LQGV), 95-115 (VVGI…IFPE), 120-140 (VLPF…LMIA), 194-214 (EVKL…ILIP), 238-258 (FILI…VGSI), 279-299 (YLLP…DTLG), and 306-326 (VEIP…LYLL).

It belongs to the binding-protein-dependent transport system permease family. FecCD subfamily. As to quaternary structure, the complex is composed of one ATP-binding protein (YfmF), two transmembrane proteins (YfmD and YfmE) and a solute-binding protein (YfmC).

It localises to the cell membrane. Part of the ABC transporter complex YfmCDEF involved in citrate-dependent Fe(3+) import. Involved in the translocation of the substrate across the membrane. The chain is Fe(3+)-citrate import system permease protein YfmE (yfmE) from Bacillus subtilis (strain 168).